Reading from the N-terminus, the 187-residue chain is ATP synthase subunit delta, chloroplastic (187 aa).

Belongs to the ATPase delta chain family. As to quaternary structure, F-type ATPases have 2 components, F(1) - the catalytic core - and F(0) - the membrane proton channel. F(1) has five subunits: alpha(3), beta(3), gamma(1), delta(1), epsilon(1). CF(0) has four main subunits: a(1), b(1), b'(1) and c(10-14). The alpha and beta chains form an alternating ring which encloses part of the gamma chain. F(1) is attached to F(0) by a central stalk formed by the gamma and epsilon chains, while a peripheral stalk is formed by the delta, b and b' chains.

The protein resides in the plastid. Its subcellular location is the chloroplast thylakoid membrane. Functionally, f(1)F(0) ATP synthase produces ATP from ADP in the presence of a proton or sodium gradient. F-type ATPases consist of two structural domains, F(1) containing the extramembraneous catalytic core and F(0) containing the membrane proton channel, linked together by a central stalk and a peripheral stalk. During catalysis, ATP synthesis in the catalytic domain of F(1) is coupled via a rotary mechanism of the central stalk subunits to proton translocation. In terms of biological role, this protein is part of the stalk that links CF(0) to CF(1). It either transmits conformational changes from CF(0) to CF(1) or is implicated in proton conduction. This is ATP synthase subunit delta, chloroplastic from Trieres chinensis (Marine centric diatom).